Here is a 111-residue protein sequence, read N- to C-terminus: MAMPNFNDMMKQLQQAGAKMQDVQKQLEKITAVGDAGGGMVKATVSGKQKVLSIAIDPEILDDIEMVQDLVVAAVNAALEKAADLAREELSKAAGGMLGGEDMLKNFNIGQ.

It belongs to the YbaB/EbfC family. As to quaternary structure, homodimer.

The protein localises to the cytoplasm. Its subcellular location is the nucleoid. Functionally, binds to DNA and alters its conformation. May be involved in regulation of gene expression, nucleoid organization and DNA protection. In Chlorobium phaeobacteroides (strain BS1), this protein is Nucleoid-associated protein Cphamn1_1179.